Here is a 474-residue protein sequence, read N- to C-terminus: uncharacterized protein (474 aa).

The span at M1–L14 shows a compositional bias: polar residues. The disordered stretch occupies residues M1 to S137. A Phosphoserine modification is found at S45. 3 stretches are compositionally biased toward polar residues: residues R73 to S83, S97 to P113, and S125 to S137. S169 is subject to Phosphoserine. 2 helical membrane-spanning segments follow: residues V210–G230 and I236–I256.

Its subcellular location is the membrane. This is an uncharacterized protein from Arabidopsis thaliana (Mouse-ear cress).